Consider the following 107-residue polypeptide: UPF0060 membrane protein Sala_0701 (107 aa).

Transmembrane regions (helical) follow at residues 4–24 (FAYIGAALAEIAGCFAFWAWL), 30–50 (VWWVVPGIASLALFAYLLTLV), 60–80 (AAYGGVYIAAALLWLWAVEGA), and 87–107 (LIGAAVCLGGAAIILFGPRGG).

The protein belongs to the UPF0060 family.

It is found in the cell inner membrane. This Sphingopyxis alaskensis (strain DSM 13593 / LMG 18877 / RB2256) (Sphingomonas alaskensis) protein is UPF0060 membrane protein Sala_0701.